The following is a 315-amino-acid chain: Olfactory receptor 5AN6 (315 aa).

The Extracellular segment spans residues 1–29 (MPGGRNSTVITKFILVGFSDFPKLKLVLF). The chain crosses the membrane as a helical span at residues 30-50 (VIFLGSYLSTVVWNLGLIILI). Over 51-54 (RIDP) the chain is Cytoplasmic. Residues 55–75 (YLHTPMYFFLSNLSFLDFCYI) form a helical membrane-spanning segment. Residues 76–99 (SSTTPKMLSGFFQKSKSISFVGCT) lie on the Extracellular side of the membrane. A disulfide bridge links C98 with C180. The chain crosses the membrane as a helical span at residues 100 to 120 (MQYFIFSSLGLSECCLLAAMA). Residues 121-123 (YDR) are Cytoplasmic-facing. A helical membrane pass occupies residues 124–143 (YAAICNPLLYTAIMSPSLCV). Position 144 (H144) is a topological domain, extracellular. Residues 145 to 165 (MVVGAYSTGLLGSLIQLCAIL) traverse the membrane as a helical segment. Over 166–202 (QLHFCGPNIINHFFCDLPQLLVLSCSETFPLQVLKFV) the chain is Cytoplasmic. Residues 203–223 (IAVIFGVASVIVILISYGYII) form a helical membrane-spanning segment. Topologically, residues 224-240 (GTILNISSVEGRSKAFN) are extracellular. The helical transmembrane segment at 241–261 (TCASHLTAVTLFFGSGLFVYM) threads the bilayer. Residues 262–272 (RPSSNSSQGYD) lie on the Cytoplasmic side of the membrane. The chain crosses the membrane as a helical span at residues 273 to 293 (KMASVFYTVVIPMLNPLIYSL). Residues 294–315 (RNKEIKDALQRCKNKCFSQCHC) are Extracellular-facing.

The protein belongs to the G-protein coupled receptor 1 family. Localized in the dorsomedial and ventral region of the olfactory bulb.

Its subcellular location is the cell membrane. Odorant receptor specific for muscone. Muscone-binding causes a conformation change that triggers signaling via G(s)-class of G alpha protein GNAL, activating adenylyl cyclase. This Mus musculus (Mouse) protein is Olfactory receptor 5AN6.